Reading from the N-terminus, the 545-residue chain is Gamma-curcumene synthase (545 aa).

4 residues coordinate Mg(2+): Asp299, Asp303, Asn442, and Glu450. The DDXXD motif motif lies at 299–303; sequence DDTYD.

It belongs to the terpene synthase family. It depends on Mg(2+) as a cofactor.

It localises to the cytoplasm. The protein resides in the cytosol. It catalyses the reaction (2E,6E)-farnesyl diphosphate = gamma-curcumene + diphosphate. The protein operates within secondary metabolite biosynthesis; terpenoid biosynthesis. In terms of biological role, sesquiterpene synthase involved in gamma-curcumene biosynthesis. The sequence is that of Gamma-curcumene synthase from Pogostemon cablin (Patchouli).